Consider the following 117-residue polypeptide: Large ribosomal subunit protein uL24 (117 aa).

This sequence belongs to the universal ribosomal protein uL24 family. In terms of assembly, part of the 50S ribosomal subunit.

Functionally, one of two assembly initiator proteins, it binds directly to the 5'-end of the 23S rRNA, where it nucleates assembly of the 50S subunit. Its function is as follows. One of the proteins that surrounds the polypeptide exit tunnel on the outside of the subunit. The sequence is that of Large ribosomal subunit protein uL24 from Nostoc punctiforme (strain ATCC 29133 / PCC 73102).